A 173-amino-acid polypeptide reads, in one-letter code: Crossover junction endodeoxyribonuclease RuvC (173 aa).

Catalysis depends on residues Asp10, Glu71, and Asp143. 3 residues coordinate Mg(2+): Asp10, Glu71, and Asp143.

Belongs to the RuvC family. In terms of assembly, homodimer which binds Holliday junction (HJ) DNA. The HJ becomes 2-fold symmetrical on binding to RuvC with unstacked arms; it has a different conformation from HJ DNA in complex with RuvA. In the full resolvosome a probable DNA-RuvA(4)-RuvB(12)-RuvC(2) complex forms which resolves the HJ. The cofactor is Mg(2+).

Its subcellular location is the cytoplasm. It carries out the reaction Endonucleolytic cleavage at a junction such as a reciprocal single-stranded crossover between two homologous DNA duplexes (Holliday junction).. Its function is as follows. The RuvA-RuvB-RuvC complex processes Holliday junction (HJ) DNA during genetic recombination and DNA repair. Endonuclease that resolves HJ intermediates. Cleaves cruciform DNA by making single-stranded nicks across the HJ at symmetrical positions within the homologous arms, yielding a 5'-phosphate and a 3'-hydroxyl group; requires a central core of homology in the junction. The consensus cleavage sequence is 5'-(A/T)TT(C/G)-3'. Cleavage occurs on the 3'-side of the TT dinucleotide at the point of strand exchange. HJ branch migration catalyzed by RuvA-RuvB allows RuvC to scan DNA until it finds its consensus sequence, where it cleaves and resolves the cruciform DNA. The polypeptide is Crossover junction endodeoxyribonuclease RuvC (Gloeobacter violaceus (strain ATCC 29082 / PCC 7421)).